The following is a 142-amino-acid chain: Large ribosomal subunit protein uL22c (142 aa).

Belongs to the universal ribosomal protein uL22 family. Part of the 50S ribosomal subunit.

Its subcellular location is the plastid. The protein localises to the chloroplast. This protein binds specifically to 23S rRNA. In terms of biological role, the globular domain of the protein is located near the polypeptide exit tunnel on the outside of the subunit, while an extended beta-hairpin is found that lines the wall of the exit tunnel in the center of the 70S ribosome. This chain is Large ribosomal subunit protein uL22c (rpl22), found in Pinus koraiensis (Korean pine).